The primary structure comprises 307 residues: tRNA dimethylallyltransferase (307 aa).

16-23 lines the ATP pocket; that stretch reads GCTAVGKT. Substrate is bound at residue 18-23; sequence TAVGKT. An interaction with substrate tRNA region spans residues 41–44; the sequence is DSLL.

Belongs to the IPP transferase family. Monomer. Requires Mg(2+) as cofactor.

It catalyses the reaction adenosine(37) in tRNA + dimethylallyl diphosphate = N(6)-dimethylallyladenosine(37) in tRNA + diphosphate. Its function is as follows. Catalyzes the transfer of a dimethylallyl group onto the adenine at position 37 in tRNAs that read codons beginning with uridine, leading to the formation of N6-(dimethylallyl)adenosine (i(6)A). The protein is tRNA dimethylallyltransferase of Opitutus terrae (strain DSM 11246 / JCM 15787 / PB90-1).